A 235-amino-acid chain; its full sequence is Leucyl/phenylalanyl-tRNA--protein transferase (235 aa).

Belongs to the L/F-transferase family.

Its subcellular location is the cytoplasm. It catalyses the reaction N-terminal L-lysyl-[protein] + L-leucyl-tRNA(Leu) = N-terminal L-leucyl-L-lysyl-[protein] + tRNA(Leu) + H(+). The catalysed reaction is N-terminal L-arginyl-[protein] + L-leucyl-tRNA(Leu) = N-terminal L-leucyl-L-arginyl-[protein] + tRNA(Leu) + H(+). It carries out the reaction L-phenylalanyl-tRNA(Phe) + an N-terminal L-alpha-aminoacyl-[protein] = an N-terminal L-phenylalanyl-L-alpha-aminoacyl-[protein] + tRNA(Phe). In terms of biological role, functions in the N-end rule pathway of protein degradation where it conjugates Leu, Phe and, less efficiently, Met from aminoacyl-tRNAs to the N-termini of proteins containing an N-terminal arginine or lysine. In Shewanella frigidimarina (strain NCIMB 400), this protein is Leucyl/phenylalanyl-tRNA--protein transferase.